We begin with the raw amino-acid sequence, 197 residues long: Nucleoside triphosphate pyrophosphatase (197 aa).

The Proton acceptor role is filled by Asp-72.

It belongs to the Maf family. It depends on a divalent metal cation as a cofactor.

The protein resides in the cytoplasm. The enzyme catalyses a ribonucleoside 5'-triphosphate + H2O = a ribonucleoside 5'-phosphate + diphosphate + H(+). The catalysed reaction is a 2'-deoxyribonucleoside 5'-triphosphate + H2O = a 2'-deoxyribonucleoside 5'-phosphate + diphosphate + H(+). Functionally, nucleoside triphosphate pyrophosphatase. May have a dual role in cell division arrest and in preventing the incorporation of modified nucleotides into cellular nucleic acids. This Corynebacterium efficiens (strain DSM 44549 / YS-314 / AJ 12310 / JCM 11189 / NBRC 100395) protein is Nucleoside triphosphate pyrophosphatase.